Reading from the N-terminus, the 611-residue chain is MSNSHPLRPFTAVGEIDHVHILSEHIGALLIGEEYGDVTFVVEKKRFPAHRVILAARCQYFRALLYGGMRESQPEAEIPLEDTTAEAFTMLLKYIYTGRATLTDEKEEVLLDFLSLAHKYGFPELEDSTSEYLCTILNIQNVCMTFDVASLYSLPKLTCMCCMFMDRNAQEVLSSEGFLSLSKTALLNIVLRDSFAAPEKDIFLALLNWCKHNSNENHAEIMQAVRLPLMSLTELLNVVRPSGLLSPDAILDAIKVRSESRDMDLNYRGMLIPEENIATMKYGAQVVKGELKSALLDGDTQNYDLDHGFSRHPIDDDCRSGIEIKLGQPSIINHIRILLWDRDSRSYSYFIEVSMDELDWIRVIDHSQYLCRSWQKLYFPARVCRYIRIVGTHNTVNKIFHIVAFECMFTNKTFTLEKGLIVPMENVATIADCASVIEGVSRSRNALLNGDTKNYDWDSSYTCHQLGSGAIVVQLAQPYMIGSIRLLLWDCDDRSYSYYVEVSTNQQQWTMVADRTKVSCKSWQSVTFERRPASFIRIVGTHNTANEVFHCVHFECPEQQSAQKDSSDEPGTGGASAAGQQLDPHALQAPSGSSLPSSPGSNSRSPNRQHQ.

One can recognise a BTB domain in the interval G36 to D104. The BACK domain occupies V142–R240. Positions Q560–Q611 are disordered. Low complexity predominate over residues A586 to Q611.

This Bos taurus (Bovine) protein is BTB/POZ domain-containing protein 9 (BTBD9).